The sequence spans 907 residues: Androgen receptor (907 aa).

Positions 1-545 (MEVQLGLGRV…PIDYYFPPQK (545 aa)) are modulating. The interval 1–574 (MEVQLGLGRV…GSCKVFFKRA (574 aa)) is interaction with ZNF318. 2 disordered regions span residues 36–152 (NPGP…LSLL) and 200–231 (QQQEVVSEGSSSGRAREAAGASTSSKDSYLGG). Low complexity predominate over residues 55-76 (QQQQQQQQQQETSPRQQQQQQQ). A Phosphoserine; by CDK9 modification is found at Ser67. At Ser81 the chain carries Phosphoserine. The span at 123–134 (TSATGKGLQQQQ) shows a compositional bias: polar residues. Low complexity predominate over residues 200–224 (QQQEVVSEGSSSGRAREAAGASTSS). Position 228 is a phosphotyrosine; by CSK (Tyr228). Residue Ser261 is modified to Phosphoserine. Residue Tyr272 is modified to Phosphotyrosine; by CSK and TNK2. Phosphotyrosine; by CSK occurs at positions 310, 349, 360, and 365. Tyr366 carries the post-translational modification Phosphotyrosine; by CSK and TNK2. Residue Lys389 forms a Glycyl lysine isopeptide (Lys-Gly) (interchain with G-Cter in SUMO) linkage. At Tyr396 the chain carries Phosphotyrosine; by CSK. A Glycyl lysine isopeptide (Lys-Gly) (interchain with G-Cter in SUMO) cross-link involves residue Lys508. 2 positions are modified to phosphotyrosine; by CSK: Tyr522 and Tyr539. Residues 539-906 (YYFPPQKTCL…GKVKPIYFHT (368 aa)) form an interaction with LPXN region. Residues 546–619 (TCLICGDEAS…AGMTLGARKL (74 aa)) constitute a DNA-binding region (nuclear receptor). NR C4-type zinc fingers lie at residues 547–567 (CLICGDEASGCHYGALTCGSC) and 583–607 (CASRNDCTIDKFRRKNCPSCRLRKC). The interval 559 to 649 (YGALTCGSCK…TEEPTQKLTV (91 aa)) is interaction with HIPK3. The tract at residues 579–906 (QKYLCASRND…GKVKPIYFHT (328 aa)) is interaction with CCAR1. Residues 612-906 (MTLGARKLKK…GKVKPIYFHT (295 aa)) form an interaction with KAT7 region. Ser638 is modified (phosphoserine; by STK4/MST1). Residues 656–887 (ECQPIFLNVL…DFPEMMAEII (232 aa)) form the NR LBD domain. Positions 693 and 740 each coordinate 17beta-hydroxy-5alpha-androstan-3-one. Residues Lys833 and Lys835 each participate in a glycyl lysine isopeptide (Lys-Gly) (interchain with G-Cter in ubiquitin) cross-link. Thr865 contributes to the 17beta-hydroxy-5alpha-androstan-3-one binding site. Tyr903 is modified (phosphotyrosine; by CSK).

It belongs to the nuclear hormone receptor family. NR3 subfamily. As to quaternary structure, binds DNA as a homodimer. Part of a ternary complex containing AR, EFCAB6/DJBP and PARK7. Interacts with HIPK3 and NR0B2 in the presence of androgen. The ligand binding domain interacts with KAT7/HBO1 in the presence of dihydrotestosterone. Interacts with EFCAB6/DJBP, PQBP1, RANBP9, RBAK, SPDEF, SRA1, TGFB1I1 and RREB1. Interacts with ZMIZ1/ZIMP10 and ZMIZ2/ZMIP7 which both enhance its transactivation activity. Interacts with SLC30A9 and RAD54L2/ARIP4. Interacts with MACROD1 (via macro domain). Interacts via the ligand-binding domain with LXXLL and FXXLF motifs from NCOA1, NCOA2, NCOA3 and MAGEA11. Interacts (via nuclear receptor DNA binding domain and nuclear receptor ligand binding domain) with NCOA4. The AR N-terminal poly-Gln region binds Ran resulting in enhancement of AR-mediated transactivation. Ran-binding decreases as the poly-Gln length increases. Interacts with HIP1 (via coiled coil domain). Interacts (via ligand-binding domain) with TRIM68. Interacts with TNK2. Interacts with USP26. Interacts with RNF6. Interacts (regulated by RNF6 probably through polyubiquitination) with RNF14; regulates AR transcriptional activity. Interacts with PRMT2 and TRIM24. Interacts with RACK1. Interacts with RANBP10; this interaction enhances dihydrotestosterone-induced AR transcriptional activity. Interacts with PRPF6 in a hormone-independent way; this interaction enhances dihydrotestosterone-induced AR transcriptional activity. Interacts with STK4/MST1. Interacts with ZIPK/DAPK3. Interacts with LPXN. Interacts with MAK. Part of a complex containing AR, MAK and NCOA3. Interacts with CRY1. Interacts with CCAR1 and GATA2. Interacts with ZNF318. Interacts with BUD31. Interacts with ARID4A. Interacts with ARID4B. Interacts (via NR LBD domain) with ZBTB7A; the interaction is direct and androgen-dependent. Interacts with NCOR1. Interacts with NCOR2. Interacts witH CRY2 in a ligand-dependent manner. Phosphorylated in prostate cancer cells in response to several growth factors including EGF. Phosphorylation is induced by c-Src kinase (CSK). Tyr-522 is one of the major phosphorylation sites and an increase in phosphorylation and Src kinase activity is associated with prostate cancer progression. Phosphorylation by TNK2 enhances the DNA-binding and transcriptional activity. Phosphorylation at Ser-67 by CDK9 regulates AR promoter selectivity and cell growth. In terms of processing, sumoylated on Lys-389 (major) and Lys-508. Ubiquitinated. Deubiquitinated by USP26. 'Lys-6' and 'Lys-27'-linked polyubiquitination by RNF6 modulates AR transcriptional activity and specificity. Post-translationally, palmitoylated by ZDHHC7 and ZDHHC21. Palmitoylation is required for plasma membrane targeting and for rapid intracellular signaling via ERK and AKT kinases and cAMP generation.

The protein resides in the nucleus. It is found in the cytoplasm. In terms of biological role, steroid hormone receptors are ligand-activated transcription factors that regulate eukaryotic gene expression and affect cellular proliferation and differentiation in target tissues. Transcription factor activity is modulated by bound coactivator and corepressor proteins like ZBTB7A that recruits NCOR1 and NCOR2 to the androgen response elements/ARE on target genes, negatively regulating androgen receptor signaling and androgen-induced cell proliferation. Transcription activation is also down-regulated by NR0B2. Activated, but not phosphorylated, by HIPK3 and ZIPK/DAPK3. The protein is Androgen receptor (AR) of Canis lupus familiaris (Dog).